A 305-amino-acid chain; its full sequence is Ribonuclease Z (305 aa).

Zn(2+) is bound by residues H61, H63, D65, H66, H138, D208, and H266. The Proton acceptor role is filled by D65.

This sequence belongs to the RNase Z family. As to quaternary structure, homodimer. It depends on Zn(2+) as a cofactor.

It carries out the reaction Endonucleolytic cleavage of RNA, removing extra 3' nucleotides from tRNA precursor, generating 3' termini of tRNAs. A 3'-hydroxy group is left at the tRNA terminus and a 5'-phosphoryl group is left at the trailer molecule.. Zinc phosphodiesterase, which displays some tRNA 3'-processing endonuclease activity. Probably involved in tRNA maturation, by removing a 3'-trailer from precursor tRNA. In Methanosarcina mazei (strain ATCC BAA-159 / DSM 3647 / Goe1 / Go1 / JCM 11833 / OCM 88) (Methanosarcina frisia), this protein is Ribonuclease Z.